The sequence spans 178 residues: uncharacterized protein (178 aa).

It belongs to the mycobacterial PPE family.

This is an uncharacterized protein from Mycobacterium tuberculosis (strain CDC 1551 / Oshkosh).